The primary structure comprises 430 residues: uncharacterized protein (430 aa).

12 consecutive transmembrane segments (helical) span residues 18–38, 49–69, 80–100, 109–129, 145–165, 175–195, 235–255, 256–276, 285–305, 307–327, 353–373, and 377–397; these read LFLL…NTFV, FIDL…TFYL, VFIL…VLLA, VLIG…FNVL, FMGI…GFVI, TVIF…SFFL, IFVF…LALG, TFGL…SRLI, ILLG…HMSF, TLLT…VPYV, MFLN…VALL, and VGIP…YYFV. Residues 407 to 430 form a disordered region; sequence GENETMEEDGQKRVTEPTLLKGER. Basic and acidic residues predominate over residues 415-430; sequence DGQKRVTEPTLLKGER.

It is found in the cell membrane. This is an uncharacterized protein from Bacillus subtilis (strain 168).